We begin with the raw amino-acid sequence, 1610 residues long: Adenylate cyclase type 10 (1610 aa).

Guanylate cyclase domains lie at 42-179 and 293-418; these read VLMF…RLAQ and TIVF…ARMM. Mg(2+) is bound by residues Asp47 and Ile48. Residue 47 to 52 participates in ATP binding; that stretch reads DISGFT. A hydrogencarbonate-binding site is contributed by Lys95. Asp99 contributes to the Mg(2+) binding site. ATP-binding residues include Asp99 and Lys144. Val167, Arg176, and Met337 together coordinate hydrogencarbonate. ATP contacts are provided by residues Val406 and 412–416; that span reads NIAAR.

Belongs to the adenylyl cyclase class-4/guanylyl cyclase family. Mg(2+) is required as a cofactor. Mn(2+) serves as cofactor.

It is found in the cell membrane. The protein localises to the cytoplasm. The protein resides in the cytoskeleton. Its subcellular location is the perinuclear region. It localises to the nucleus. It is found in the cell projection. The protein localises to the cilium. The catalysed reaction is ATP = 3',5'-cyclic AMP + diphosphate. Its activity is regulated as follows. Activated by manganese or magnesium ions. In the presence of magnesium ions, the enzyme is activated by bicarbonate. Calcium mildly increases the enzyme activity, also in the presence of magnesium ions. Its function is as follows. Catalyzes the formation of the signaling molecule cAMP. May function as sensor that mediates responses to changes in cellular bicarbonate and CO(2) levels. Has a critical role in mammalian spermatogenesis by producing the cAMP which regulates cAMP-responsive nuclear factors indispensable for sperm maturation in the epididymis. Induces capacitation, the maturational process that sperm undergo prior to fertilization. Involved in ciliary beat regulation. The sequence is that of Adenylate cyclase type 10 (ADCY10) from Oryctolagus cuniculus (Rabbit).